A 174-amino-acid chain; its full sequence is Large ribosomal subunit protein uL18 (174 aa).

The protein belongs to the universal ribosomal protein uL18 family. As to quaternary structure, part of the 50S ribosomal subunit. Contacts the 5S and 23S rRNAs.

In terms of biological role, this is one of the proteins that bind and probably mediate the attachment of the 5S RNA into the large ribosomal subunit, where it forms part of the central protuberance. The polypeptide is Large ribosomal subunit protein uL18 (Methanocorpusculum labreanum (strain ATCC 43576 / DSM 4855 / Z)).